The chain runs to 92 residues: MAYLHHTLLVCMGLLAMANAEAPQEQDPFTYDYQSLRIGGLIIAGILFILGILIILKRGAWERFDTARRTGEPDEEEGTFRSSIRRLSTRRR.

An N-terminal signal peptide occupies residues Met-1–Ala-20. Over Ala-22–Ser-35 the chain is Extracellular. The chain crosses the membrane as a helical span at residues Leu-36 to Leu-56. The Cytoplasmic portion of the chain corresponds to Lys-57–Arg-92. The disordered stretch occupies residues Ala-67–Arg-92. The residue at position 79 (Thr-79) is a Phosphothreonine. Ser-82 carries the phosphoserine modification. Ser-83 bears the Phosphoserine; by PKA and PKC mark. The segment covering Ser-83 to Arg-92 has biased composition (basic residues). Ser-88 carries the post-translational modification Phosphoserine; by PKA. Thr-89 is subject to Phosphothreonine; by PKC.

Belongs to the FXYD family. As to quaternary structure, homotetramer. Monomer. Regulatory subunit of the sodium/potassium-transporting ATPase (NKA) which is composed of a catalytic alpha subunit, a non-catalytic beta subunit and an additional regulatory subunit. The monomeric form associates with NKA while the oligomeric form does not. Interacts with the catalytic alpha-1 subunit ATP1A1. Also interacts with the catalytic alpha-2 and alpha-3 subunits ATP1A2 and ATP1A3. Very little interaction with ATP1A1, ATP1A2 or ATP1A3 when phosphorylated at Ser-83. Interacts with the non-catalytic beta-1 subunit ATP1B1. Oxidative stress decreases interaction with ATP1A1 but increases interaction with ATP1B1. Post-translationally, major plasma membrane substrate for cAMP-dependent protein kinase (PKA) and protein kinase C (PKC) in several different tissues. Phosphorylated in response to insulin and adrenergic stimulation. Phosphorylation at Ser-88 stimulates sodium/potassium-transporting ATPase activity while the unphosphorylated form inhibits sodium/potassium-transporting ATPase activity. Phosphorylation increases tetramerization, decreases binding to ATP1A1 and reduces inhibition of ATP1A1 activity. Phosphorylation at Ser-83 leads to greatly reduced interaction with ATP1A1, ATP1A2 and ATP1A3. May be phosphorylated by DMPK. In terms of processing, palmitoylation increases half-life and stability and is enhanced upon phosphorylation at Ser-88 by PKA. Glutathionylated. As to expression, expressed in ventricular myocytes (at protein level).

The protein resides in the cell membrane. It localises to the sarcolemma. It is found in the apical cell membrane. The protein localises to the membrane. Its subcellular location is the caveola. The protein resides in the T-tubule. In terms of biological role, associates with and regulates the activity of the sodium/potassium-transporting ATPase (NKA) which transports Na(+) out of the cell and K(+) into the cell. Inhibits NKA activity in its unphosphorylated state and stimulates activity when phosphorylated. Reduces glutathionylation of the NKA beta-1 subunit ATP1B1, thus reversing glutathionylation-mediated inhibition of ATP1B1. Contributes to female sexual development by maintaining the excitability of neurons which secrete gonadotropin-releasing hormone. This is Phospholemman from Oryctolagus cuniculus (Rabbit).